Here is a 597-residue protein sequence, read N- to C-terminus: Probable methyltransferase-like protein 25 (597 aa).

Over residues 245 to 254 the composition is skewed to basic and acidic residues; sequence ECKGDAESVQ. Disordered regions lie at residues 245-265 and 317-342; these read ECKGDAESVQRSRLGNPDLSA and TSSQVQNTEKSGLRKERRNTASKARD. A compositionally biased stretch (polar residues) spans 317–326; that stretch reads TSSQVQNTEK.

Its function is as follows. Probable methyltransferase. This chain is Probable methyltransferase-like protein 25 (Mettl25), found in Mus musculus (Mouse).